The chain runs to 207 residues: DNA-directed RNA polymerase subunit alpha (207 aa).

This sequence belongs to the RNA polymerase alpha chain family. As to quaternary structure, in plastids the minimal PEP RNA polymerase catalytic core is composed of four subunits: alpha, beta, beta', and beta''. When a (nuclear-encoded) sigma factor is associated with the core the holoenzyme is formed, which can initiate transcription.

The protein localises to the plastid. It is found in the chloroplast. The enzyme catalyses RNA(n) + a ribonucleoside 5'-triphosphate = RNA(n+1) + diphosphate. In terms of biological role, DNA-dependent RNA polymerase catalyzes the transcription of DNA into RNA using the four ribonucleoside triphosphates as substrates. This is DNA-directed RNA polymerase subunit alpha (rpoA) from Euglena anabaena (Euglenaria anabaena).